The chain runs to 144 residues: Large ribosomal subunit protein uL15 (144 aa).

Residues 1–58 (MNLSNLRAPRKANEKKKRVGRGMGSGMGKTSARGHKGQRSRSGSRMMRGFEGGQMPLH) are disordered. Residues 8–20 (APRKANEKKKRVG) are compositionally biased toward basic residues. The span at 40–49 (SRSGSRMMRG) shows a compositional bias: low complexity.

Belongs to the universal ribosomal protein uL15 family. In terms of assembly, part of the 50S ribosomal subunit.

In terms of biological role, binds to the 23S rRNA. The chain is Large ribosomal subunit protein uL15 from Koribacter versatilis (strain Ellin345).